A 322-amino-acid chain; its full sequence is UDP-N-acetylenolpyruvoylglucosamine reductase (322 aa).

Residues 36-202 enclose the FAD-binding PCMH-type domain; it reads RAGGPAQVLF…TSVLFEGVPG (167 aa). Arg-182 is an active-site residue. Ser-231 functions as the Proton donor in the catalytic mechanism. Glu-301 is a catalytic residue.

This sequence belongs to the MurB family. The cofactor is FAD.

The protein localises to the cytoplasm. It carries out the reaction UDP-N-acetyl-alpha-D-muramate + NADP(+) = UDP-N-acetyl-3-O-(1-carboxyvinyl)-alpha-D-glucosamine + NADPH + H(+). It participates in cell wall biogenesis; peptidoglycan biosynthesis. Functionally, cell wall formation. In Brucella melitensis biotype 2 (strain ATCC 23457), this protein is UDP-N-acetylenolpyruvoylglucosamine reductase.